The primary structure comprises 397 residues: Elongation factor Tu (397 aa).

In terms of domain architecture, tr-type G spans leucine 10–valine 207. The tract at residues glycine 19 to threonine 26 is G1. GTP is bound at residue glycine 19–threonine 26. Threonine 26 is a binding site for Mg(2+). The tract at residues glycine 60–asparagine 64 is G2. The G3 stretch occupies residues aspartate 81 to glycine 84. GTP-binding positions include aspartate 81–histidine 85 and asparagine 136–aspartate 139. The interval asparagine 136–aspartate 139 is G4. The tract at residues serine 174 to arginine 176 is G5.

This sequence belongs to the TRAFAC class translation factor GTPase superfamily. Classic translation factor GTPase family. EF-Tu/EF-1A subfamily. As to quaternary structure, monomer.

The protein localises to the cytoplasm. It carries out the reaction GTP + H2O = GDP + phosphate + H(+). GTP hydrolase that promotes the GTP-dependent binding of aminoacyl-tRNA to the A-site of ribosomes during protein biosynthesis. This is Elongation factor Tu from Pseudomonas putida (strain ATCC 700007 / DSM 6899 / JCM 31910 / BCRC 17059 / LMG 24140 / F1).